The sequence spans 788 residues: Cadherin-related family member 4 (788 aa).

An N-terminal signal peptide occupies residues 1–16 (MVLLRLLVFLFAPVVS). Topologically, residues 17 to 686 (DLCSLPCFIN…DTEAFWQPQP (670 aa)) are extracellular. Cadherin domains are found at residues 237 to 338 (LEQA…PPRC), 339 to 449 (LPAL…APRT), 444 to 554 (ACAP…EPPF), and 551 to 674 (EPPF…TPML). An N-linked (GlcNAc...) asparagine glycan is attached at N242. Residues 687–707 (WFVVVLTATGALLLLALGWLL) traverse the membrane as a helical segment. The Cytoplasmic segment spans residues 708–788 (GRLLQGLAQL…NTHTGARRWL (81 aa)).

It is found in the membrane. In terms of biological role, cadherins are calcium-dependent cell adhesion proteins. They preferentially interact with themselves in a homophilic manner in connecting cells; cadherins may thus contribute to the sorting of heterogeneous cell types. The polypeptide is Cadherin-related family member 4 (CDHR4) (Homo sapiens (Human)).